Consider the following 85-residue polypeptide: U4-theraphotoxin-Hhn1a (85 aa).

Residues 1 to 22 (MKVTLIAILTCAAVLVLHTTAA) form the signal peptide. Residues 23 to 48 (EELEAESQLMEVGMPDTELAAVDEER) constitute a propeptide that is removed on maturation. 3 cysteine pairs are disulfide-bonded: cysteine 52–cysteine 66, cysteine 56–cysteine 77, and cysteine 71–cysteine 82.

This sequence belongs to the neurotoxin 12 (Hwtx-2) family. 02 (Hwtx-2) subfamily. Monomer. As to expression, expressed by the venom gland.

It localises to the secreted. In terms of biological role, neurotoxin active on both insects and mammals. This Cyriopagopus hainanus (Chinese bird spider) protein is U4-theraphotoxin-Hhn1a.